The following is a 623-amino-acid chain: Chaperone protein DnaK (623 aa).

Position 197 is a phosphothreonine; by autocatalysis (Thr197). The segment at 600–623 (KKDENAGANGGNKKDDDVIDAEVE) is disordered.

It belongs to the heat shock protein 70 family.

Functionally, acts as a chaperone. The chain is Chaperone protein DnaK from Campylobacter concisus (strain 13826).